The chain runs to 183 residues: UPF0398 protein MCCL_1095 (183 aa).

It belongs to the UPF0398 family.

This Macrococcus caseolyticus (strain JCSC5402) (Macrococcoides caseolyticum) protein is UPF0398 protein MCCL_1095.